We begin with the raw amino-acid sequence, 507 residues long: Probable DNA ligase (507 aa).

Position 209 (Glu-209) interacts with ATP. The active-site N6-AMP-lysine intermediate is the Lys-211. ATP is bound by residues Arg-216, Arg-231, Glu-260, Phe-300, Arg-372, and Lys-378.

It belongs to the ATP-dependent DNA ligase family. The cofactor is Mg(2+).

The enzyme catalyses ATP + (deoxyribonucleotide)n-3'-hydroxyl + 5'-phospho-(deoxyribonucleotide)m = (deoxyribonucleotide)n+m + AMP + diphosphate.. DNA ligase that seals nicks in double-stranded DNA during DNA replication, DNA recombination and DNA repair. This chain is Probable DNA ligase, found in Mycobacterium bovis (strain ATCC BAA-935 / AF2122/97).